The chain runs to 420 residues: Histidine--tRNA ligase (420 aa).

Belongs to the class-II aminoacyl-tRNA synthetase family. As to quaternary structure, homodimer.

The protein resides in the cytoplasm. It carries out the reaction tRNA(His) + L-histidine + ATP = L-histidyl-tRNA(His) + AMP + diphosphate + H(+). The chain is Histidine--tRNA ligase from Ureaplasma parvum serovar 3 (strain ATCC 27815 / 27 / NCTC 11736).